The primary structure comprises 454 residues: uncharacterized protein (454 aa).

A disordered region spans residues 1-25 (MHGPTSKAISRNVRSVKRPRRAPRP). A compositionally biased stretch (basic residues) spans 14–23 (RSVKRPRRAP).

It localises to the cytoplasm. Its subcellular location is the nucleus. This is an uncharacterized protein from Saccharomyces cerevisiae (strain ATCC 204508 / S288c) (Baker's yeast).